The following is a 278-amino-acid chain: Probable septum site-determining protein MinC (278 aa).

This sequence belongs to the MinC family. As to quaternary structure, interacts with MinD and FtsZ.

Its function is as follows. Cell division inhibitor that blocks the formation of polar Z ring septums. Rapidly oscillates between the poles of the cell to destabilize FtsZ filaments that have formed before they mature into polar Z rings. Prevents FtsZ polymerization. The chain is Probable septum site-determining protein MinC from Gloeobacter violaceus (strain ATCC 29082 / PCC 7421).